The sequence spans 478 residues: Ribosomal RNA small subunit methyltransferase F (478 aa).

Residues 125-131 (AAAPGSK), glutamate 149, aspartate 176, and aspartate 194 each bind S-adenosyl-L-methionine. Catalysis depends on cysteine 247, which acts as the Nucleophile.

It belongs to the class I-like SAM-binding methyltransferase superfamily. RsmB/NOP family.

The protein localises to the cytoplasm. It catalyses the reaction cytidine(1407) in 16S rRNA + S-adenosyl-L-methionine = 5-methylcytidine(1407) in 16S rRNA + S-adenosyl-L-homocysteine + H(+). In terms of biological role, specifically methylates the cytosine at position 1407 (m5C1407) of 16S rRNA. The protein is Ribosomal RNA small subunit methyltransferase F of Serratia proteamaculans (strain 568).